The sequence spans 804 residues: Putative mRNA-capping enzyme P5 (804 aa).

It belongs to the phytoreovirus protein P5 family.

The protein resides in the virion. It is found in the host cytoplasm. The catalysed reaction is a 5'-end diphospho-ribonucleoside in mRNA + GTP + H(+) = a 5'-end (5'-triphosphoguanosine)-ribonucleoside in mRNA + diphosphate. Its pathway is mRNA processing; mRNA capping. In terms of biological role, enzyme involved in mRNA capping (Potential). Binds to GTP and might have guanylyltransferase activity. Together with the RNA-directed RNA polymerase P1 and protein P7, forms an transcriptional complex positioned near the channels situated at each of the five-fold vertices of the core. The protein is Putative mRNA-capping enzyme P5 of Catharanthus roseus (Madagascar periwinkle).